A 399-amino-acid polypeptide reads, in one-letter code: MGGRGAIGVLRNGGGPKKKMGPGQGLGPGERITHARPPFSISQIKKAIPPHCFQRSLRRSFSYLLSDIALVSAFYYVADTYFHRLPHPLLHYLAWPVYWFCQGAVLTGMWGIAHDCGHHAFSDYQLVDDVVGFLIHSLVFVPYFSFKISHRRHHSNTSSVDRDEVFVPKPKAKMPWYFKYLTNPPARVFIIFITLTLGWPMYLTFNISGRYYGRFTSHFDPNSPIFSPKERVLVHISNAGLVATGYLLYRIAMAKGVGWLIRLYGVPLIVLNACVVLITALQHTHPSFPYYDSTEWDWLRGNLVTVDRDYGPIMNRVFHHITDTHVVHHLFPSMPHYNGKEATVAAKRILGEYYQFDGTPIWKAAWREFRECVYVEPDEDDGATSGSSSKGVFWYHNKL.

The tract at residues 11-30 (RNGGGPKKKMGPGQGLGPGE) is disordered. Transmembrane regions (helical) follow at residues 61–81 (FSYL…ADTY) and 93–113 (LAWP…WGIA). The short motif at 114–118 (HDCGH) is the Histidine box-1 element. Residues 126 to 146 (LVDDVVGFLIHSLVFVPYFSF) traverse the membrane as a helical segment. The Histidine box-2 motif lies at 150 to 154 (HRRHH). A run of 3 helical transmembrane segments spans residues 188-208 (VFII…FNIS), 232-252 (VLVH…YRIA), and 258-278 (GWLI…VVLI). The Histidine box-3 signature appears at 325 to 329 (HVVHH).

It belongs to the fatty acid desaturase type 1 family. Expressed in developing seeds, but not in leaves.

It localises to the membrane. The enzyme catalyses a (9Z,12Z)-octadecadienoyl-containing glycerolipid + 2 Fe(II)-[cytochrome b5] + O2 + 2 H(+) = a (9Z,11E,13E)-octadecatrienoyl-containing glycerolipid + 2 Fe(III)-[cytochrome b5] + 2 H2O. It catalyses the reaction (9Z,12Z,15Z)-octadecatrienoyl-containing glycerolipid + 2 Fe(II)-[cytochrome b5] + O2 + 2 H(+) = a (9Z,11E,13E,15Z)-octadecatetraenoyl-containing glycerolipid + 2 Fe(III)-[cytochrome b5] + 2 H2O. Its pathway is lipid metabolism; polyunsaturated fatty acid biosynthesis. Converts linoleic acid to alpha-eleostearic acid (18:3(9Z,11E,13E)) and alpha-linolenic acid to alpha-parinaric acid (18:4(9Z,11E, 13E, 15Z)). Converts a single cis double bond at carbon 12 to two conjugated trans bonds at positions 11 and 13. This chain is Delta(12) acyl-lipid conjugase (11E,13E-forming), found in Momordica charantia (Bitter gourd).